The sequence spans 1587 residues: Mediator of RNA polymerase II transcription subunit 23 (1587 aa).

2 disordered regions span residues 1374 to 1484 (SQSE…QLQH) and 1567 to 1587 (QHQQ…QQPH). Positions 1385–1404 (PPEKEKSPEKEKEQEQEQHV) are enriched in basic and acidic residues. Residues 1387 to 1404 (EKEKSPEKEKEQEQEQHV) form an acidic region. The segment covering 1410–1426 (LESTPSVSSLPQMQHHL) has biased composition (polar residues). Positions 1430-1450 (PLLPSHQMMPPPQQHSSSLQH) are enriched in low complexity. Polar residues predominate over residues 1463 to 1484 (DTSQHQTIQQQSNHPTQQQLQH). Over residues 1567–1576 (QHQQYMQQQQ) the composition is skewed to low complexity. The segment covering 1577 to 1587 (QHHHQHQQQPH) has biased composition (basic residues).

It belongs to the Mediator complex subunit 23 family. Component of the Mediator complex. Interacts with let-19/mdt-13.

The protein resides in the nucleus. Component of the Mediator complex, a coactivator involved in regulated gene transcription of nearly all RNA polymerase II-dependent genes. Mediator functions as a bridge to convey information from gene-specific regulatory proteins to the basal RNA polymerase II transcription machinery. Mediator is recruited to promoters by direct interactions with regulatory proteins and serves as a scaffold for the assembly of a functional pre-initiation complex with RNA polymerase II and the general transcription factors. Functions downstream of receptor let-23 and let-60/Ras during vulval induction likely by down-regulating the expression of phosphatase dep-1 and lin-12/Notch in vulva precursor cell descendants with a primary cell fate. Acts to repress beta-catenin target genes. Required for asymmetric division of T-cells. Plays a role in responses to M.nematophilum-mediated bacterial infection by promoting tail swelling and preventing constipation. This is Mediator of RNA polymerase II transcription subunit 23 (sur-2) from Caenorhabditis elegans.